A 511-amino-acid polypeptide reads, in one-letter code: 2,3-bisphosphoglycerate-independent phosphoglycerate mutase (511 aa).

2 residues coordinate Mn(2+): aspartate 14 and serine 64. The Phosphoserine intermediate role is filled by serine 64. Substrate is bound by residues histidine 125, 155-156 (RD), arginine 187, arginine 193, 259-262 (RADR), and lysine 333. Mn(2+)-binding residues include aspartate 400, histidine 404, aspartate 441, histidine 442, and histidine 460.

The protein belongs to the BPG-independent phosphoglycerate mutase family. Monomer. The cofactor is Mn(2+).

The enzyme catalyses (2R)-2-phosphoglycerate = (2R)-3-phosphoglycerate. Its pathway is carbohydrate degradation; glycolysis; pyruvate from D-glyceraldehyde 3-phosphate: step 3/5. In terms of biological role, catalyzes the interconversion of 2-phosphoglycerate and 3-phosphoglycerate. The sequence is that of 2,3-bisphosphoglycerate-independent phosphoglycerate mutase from Pseudomonas putida (strain ATCC 47054 / DSM 6125 / CFBP 8728 / NCIMB 11950 / KT2440).